The primary structure comprises 238 residues: Flagellar L-ring protein (238 aa).

A signal peptide spans 1–17; that stretch reads MIRKTLAASCAVLLMAG. The N-palmitoyl cysteine moiety is linked to residue C18. C18 is lipidated: S-diacylglycerol cysteine.

Belongs to the FlgH family. In terms of assembly, the basal body constitutes a major portion of the flagellar organelle and consists of four rings (L,P,S, and M) mounted on a central rod.

It localises to the cell outer membrane. Its subcellular location is the bacterial flagellum basal body. Its function is as follows. Assembles around the rod to form the L-ring and probably protects the motor/basal body from shearing forces during rotation. The chain is Flagellar L-ring protein from Nitratidesulfovibrio vulgaris (strain ATCC 29579 / DSM 644 / CCUG 34227 / NCIMB 8303 / VKM B-1760 / Hildenborough) (Desulfovibrio vulgaris).